A 423-amino-acid polypeptide reads, in one-letter code: Ribosome biogenesis protein WDR12 homolog (423 aa).

The segment at 10 to 93 (VQVHLKTKQE…EDAIEIEYVE (84 aa)) is ubiquitin-like (UBL) domain. 7 WD repeats span residues 105–142 (LHDD…ILTI), 144–186 (GHTA…NAVE), 193–232 (GHER…AGGD), 253–291 (GHRE…IKTE), 293–332 (STNK…GSIV), 338–378 (GHNA…APLY), and 382–420 (GHGE…VETM).

Belongs to the WD repeat WDR12/YTM1 family.

The protein localises to the nucleus. It localises to the nucleolus. Its subcellular location is the nucleoplasm. Functionally, required for maturation of ribosomal RNAs and formation of the large ribosomal subunit. The polypeptide is Ribosome biogenesis protein WDR12 homolog (Drosophila willistoni (Fruit fly)).